A 549-amino-acid chain; its full sequence is Phosphoenolpyruvate carboxykinase (ATP) (549 aa).

250–257 (GLSGTGKT) is a binding site for ATP.

The protein belongs to the phosphoenolpyruvate carboxykinase (ATP) family. As to quaternary structure, homotetramer.

It carries out the reaction oxaloacetate + ATP = phosphoenolpyruvate + ADP + CO2. It participates in carbohydrate biosynthesis; gluconeogenesis. This Saccharomyces cerevisiae (strain ATCC 204508 / S288c) (Baker's yeast) protein is Phosphoenolpyruvate carboxykinase (ATP) (PCK1).